The chain runs to 379 residues: Leukocyte elastase inhibitor A (379 aa).

Phosphoserine is present on Ser300.

Belongs to the serpin family. Ov-serpin subfamily. As to quaternary structure, monomer.

It is found in the secreted. The protein localises to the cytoplasm. The protein resides in the cytolytic granule. Its subcellular location is the early endosome. Its function is as follows. Regulates the activity of the neutrophil proteases. The protein is Leukocyte elastase inhibitor A (Serpinb1a) of Rattus norvegicus (Rat).